The primary structure comprises 347 residues: N-acetyl-gamma-glutamyl-phosphate reductase (347 aa).

Cys152 is a catalytic residue.

Belongs to the NAGSA dehydrogenase family. Type 1 subfamily.

It localises to the cytoplasm. It carries out the reaction N-acetyl-L-glutamate 5-semialdehyde + phosphate + NADP(+) = N-acetyl-L-glutamyl 5-phosphate + NADPH + H(+). It functions in the pathway amino-acid biosynthesis; L-arginine biosynthesis; N(2)-acetyl-L-ornithine from L-glutamate: step 3/4. Its function is as follows. Catalyzes the NADPH-dependent reduction of N-acetyl-5-glutamyl phosphate to yield N-acetyl-L-glutamate 5-semialdehyde. This chain is N-acetyl-gamma-glutamyl-phosphate reductase, found in Neisseria meningitidis serogroup C / serotype 2a (strain ATCC 700532 / DSM 15464 / FAM18).